A 213-amino-acid chain; its full sequence is Cytidylate kinase (213 aa).

G7–T15 is a binding site for ATP.

It belongs to the cytidylate kinase family. Type 1 subfamily.

Its subcellular location is the cytoplasm. It carries out the reaction CMP + ATP = CDP + ADP. It catalyses the reaction dCMP + ATP = dCDP + ADP. The sequence is that of Cytidylate kinase from Rhodospirillum rubrum (strain ATCC 11170 / ATH 1.1.1 / DSM 467 / LMG 4362 / NCIMB 8255 / S1).